The following is a 398-amino-acid chain: MKKITILGSTGSIGINALSIIQKNPDLFKVIALVANKNFSIMLRQCELFSPDWVAMRDEKSAHILRKKLKHSKINTQVLTGEKDICALAALEETDHVISAIVGMAGLLPTLSAIHAGKTILLANKESLITSGYFFMKALSSSGAKIIPIDSEHNAIFQVLPLEIQKNLGKTTLEKNSIKHLVLTGSGGPFYKFSSSDLSNVTPDQACSHPNWLMGKKISVDSATMMNKGLEYAEARWLFNALESEIKILIHPESIIHSMVQYYDGSLLAQLSAPDIRTSISYAMSWPDRICTEVDYLNFYKINNLTFFEPDFTQFPCLKLAIDAFSQGQASMTVLNAANEIAVSSFLDSKISFTKIYEINMEILMSSCFSEPKCIQDILEIDRKVRILAKNKVSSLIF.

Residues Thr-10, Gly-11, Ser-12, Ile-13, Lys-37, Asn-38, and Asn-124 each contribute to the NADPH site. Lys-125 serves as a coordination point for 1-deoxy-D-xylulose 5-phosphate. Glu-126 provides a ligand contact to NADPH. Asp-150 contacts Mn(2+). 1-deoxy-D-xylulose 5-phosphate-binding residues include Ser-151, Glu-152, Ser-186, and His-209. A Mn(2+)-binding site is contributed by Glu-152. Gly-215 provides a ligand contact to NADPH. 4 residues coordinate 1-deoxy-D-xylulose 5-phosphate: Ser-222, Asn-227, Lys-228, and Glu-231. Glu-231 contacts Mn(2+).

It belongs to the DXR family. Homodimer. Requires Mg(2+) as cofactor. Mn(2+) serves as cofactor.

It carries out the reaction 2-C-methyl-D-erythritol 4-phosphate + NADP(+) = 1-deoxy-D-xylulose 5-phosphate + NADPH + H(+). It participates in isoprenoid biosynthesis; isopentenyl diphosphate biosynthesis via DXP pathway; isopentenyl diphosphate from 1-deoxy-D-xylulose 5-phosphate: step 1/6. Functionally, catalyzes the NADPH-dependent rearrangement and reduction of 1-deoxy-D-xylulose-5-phosphate (DXP) to 2-C-methyl-D-erythritol 4-phosphate (MEP). This Buchnera aphidicola subsp. Acyrthosiphon pisum (strain 5A) protein is 1-deoxy-D-xylulose 5-phosphate reductoisomerase.